Consider the following 106-residue polypeptide: uncharacterized protein (106 aa).

2 consecutive transmembrane segments (helical) span residues 17-37 (AGLLMTISLAKSFSFAIAVLV) and 55-75 (FSSSYVFLYFIVICRLRFMIF).

It is found in the membrane. This is an uncharacterized protein from Saccharomyces cerevisiae (strain ATCC 204508 / S288c) (Baker's yeast).